A 465-amino-acid chain; its full sequence is UDP-N-acetylglucosamine 1-carboxyvinyltransferase (465 aa).

A phosphoenolpyruvate-binding site is contributed by 22-23 (KN). R94 contacts UDP-N-acetyl-alpha-D-glucosamine. C119 functions as the Proton donor in the catalytic mechanism. C119 is subject to 2-(S-cysteinyl)pyruvic acid O-phosphothioketal. The UDP-N-acetyl-alpha-D-glucosamine site is built by D313 and V335.

The protein belongs to the EPSP synthase family. MurA subfamily.

The protein resides in the cytoplasm. It catalyses the reaction phosphoenolpyruvate + UDP-N-acetyl-alpha-D-glucosamine = UDP-N-acetyl-3-O-(1-carboxyvinyl)-alpha-D-glucosamine + phosphate. It participates in cell wall biogenesis; peptidoglycan biosynthesis. Functionally, cell wall formation. Adds enolpyruvyl to UDP-N-acetylglucosamine. This Protochlamydia amoebophila (strain UWE25) protein is UDP-N-acetylglucosamine 1-carboxyvinyltransferase.